The primary structure comprises 655 residues: Serine/threonine-protein kinase SKM1 (655 aa).

In terms of domain architecture, PH spans Gly-3–Pro-118. The CRIB domain maps to Val-123–Gly-136. Composition is skewed to basic and acidic residues over residues Glu-265 to Thr-276 and Lys-318 to His-327. The interval Glu-265–His-327 is disordered. Positions Phe-360 to Leu-639 constitute a Protein kinase domain. Residues Ala-366–Val-374 and Lys-406 contribute to the ATP site. The active-site Proton acceptor is the Asp-507.

It belongs to the protein kinase superfamily. STE Ser/Thr protein kinase family. STE20 subfamily.

The catalysed reaction is L-seryl-[protein] + ATP = O-phospho-L-seryl-[protein] + ADP + H(+). It catalyses the reaction L-threonyl-[protein] + ATP = O-phospho-L-threonyl-[protein] + ADP + H(+). In terms of biological role, may be involved in cellular signaling or cytoskeletal functions. May play a role in morphogenetic control. This Saccharomyces cerevisiae (strain ATCC 204508 / S288c) (Baker's yeast) protein is Serine/threonine-protein kinase SKM1 (SKM1).